The primary structure comprises 283 residues: Polyamine aminopropyltransferase (283 aa).

Residues 3–236 (GIWFSELQTP…GLWAFSLGSK (234 aa)) form the PABS domain. Gln-32 is an S-methyl-5'-thioadenosine binding site. His-63 and Asp-87 together coordinate spermidine. S-methyl-5'-thioadenosine contacts are provided by residues Glu-107 and 138 to 139 (DG). Residue Asp-156 is the Proton acceptor of the active site. Spermidine is bound at residue 156–159 (DSTD). Pro-163 serves as a coordination point for S-methyl-5'-thioadenosine.

It belongs to the spermidine/spermine synthase family. As to quaternary structure, homodimer or homotetramer.

Its subcellular location is the cytoplasm. The catalysed reaction is S-adenosyl 3-(methylsulfanyl)propylamine + putrescine = S-methyl-5'-thioadenosine + spermidine + H(+). It functions in the pathway amine and polyamine biosynthesis; spermidine biosynthesis; spermidine from putrescine: step 1/1. Functionally, catalyzes the irreversible transfer of a propylamine group from the amino donor S-adenosylmethioninamine (decarboxy-AdoMet) to putrescine (1,4-diaminobutane) to yield spermidine. This chain is Polyamine aminopropyltransferase, found in Moorella thermoacetica (strain ATCC 39073 / JCM 9320).